Here is a 644-residue protein sequence, read N- to C-terminus: Methionine--tRNA ligase (644 aa).

Residues 14–24 (YYPSAKLHIGN) carry the 'HIGH' region motif. Positions 129, 132, 146, and 149 each coordinate Zn(2+). The 'KMSKS' region signature appears at 299–303 (KMSKS). Lys-302 contacts ATP. In terms of domain architecture, tRNA-binding spans 542 to 644 (DVDKLDLRVV…EDIPTGSIVR (103 aa)).

The protein belongs to the class-I aminoacyl-tRNA synthetase family. MetG type 2A subfamily. Homodimer. Requires Zn(2+) as cofactor.

Its subcellular location is the cytoplasm. It carries out the reaction tRNA(Met) + L-methionine + ATP = L-methionyl-tRNA(Met) + AMP + diphosphate. Is required not only for elongation of protein synthesis but also for the initiation of all mRNA translation through initiator tRNA(fMet) aminoacylation. The polypeptide is Methionine--tRNA ligase (metG) (Clostridium acetobutylicum (strain ATCC 824 / DSM 792 / JCM 1419 / IAM 19013 / LMG 5710 / NBRC 13948 / NRRL B-527 / VKM B-1787 / 2291 / W)).